The primary structure comprises 326 residues: Phenylserine dehydratase (326 aa).

Monomer. It depends on pyridoxal 5'-phosphate as a cofactor.

The catalysed reaction is L-threo-3-phenylserine = 3-phenylpyruvate + NH4(+). Its activity is regulated as follows. Inhibited by phenylhydrazine, hydroxylamine, p-chloromercuribenzoate, and HgCl(2). This chain is Phenylserine dehydratase, found in Ralstonia pickettii (Burkholderia pickettii).